The following is a 552-amino-acid chain: uncharacterized protein (552 aa).

Residues 8 to 200 (KLFAEMIIQG…LAIVYAGFLK (193 aa)) enclose the DhaL domain.

This is an uncharacterized protein from Staphylococcus saprophyticus subsp. saprophyticus (strain ATCC 15305 / DSM 20229 / NCIMB 8711 / NCTC 7292 / S-41).